The following is a 246-amino-acid chain: TLC domain-containing protein 2 (246 aa).

6 consecutive transmembrane segments (helical) span residues 5-25 (SVILTTGSSVGFFKLVNYGLG), 43-63 (ISTSFVHSLITGVWSVLCFCM), 79-99 (SHALVSVSIGYFIYDFLDMVI), 107-127 (WELLFHHVVVITCFGISVLTC), 128-148 (RYVGFAVVALLVEINSVFLHL), and 199-219 (FSYTIGSVGLAIMTAMNIVLF). The TLC domain maps to 35-231 (RNAWKWNNIS…LMRSDFMKAS (197 aa)).

Belongs to the TLCD family.

The protein resides in the cell membrane. Regulates the composition and fluidity of the plasma membrane. Inhibits the incorporation of membrane-fluidizing phospholipids containing omega-3 long-chain polyunsaturated fatty acids (LCPUFA) and thereby promotes membrane rigidity. Does not appear to have any effect on LCPUFA synthesis. This is TLC domain-containing protein 2 (tlcd2) from Danio rerio (Zebrafish).